Consider the following 135-residue polypeptide: Small ribosomal subunit protein uS9 (135 aa).

A compositionally biased stretch (basic and acidic residues) spans 108 to 118 (VGDPRRTEPHK). Residues 108-135 (VGDPRRTEPHKPNRSTKGPRAKRQKSYR) are disordered. The segment covering 119–135 (PNRSTKGPRAKRQKSYR) has biased composition (basic residues).

The protein belongs to the universal ribosomal protein uS9 family.

The protein is Small ribosomal subunit protein uS9 (rps9) of Pyrococcus abyssi (strain GE5 / Orsay).